The primary structure comprises 46 residues: KSCCPBTTGRBIYBTCRFGGGSRZVCARISGCKIISASTCPSYPBK.

3 cysteine pairs are disulfide-bonded: cysteine 3-cysteine 40, cysteine 4-cysteine 32, and cysteine 16-cysteine 26.

Belongs to the plant thionin (TC 1.C.44) family.

Its subcellular location is the secreted. Functionally, thionins are small plant proteins which are toxic to animal cells. They seem to exert their toxic effect at the level of the cell membrane. Their precise function is not known. This chain is Viscotoxin-1-PS (THI2.4), found in Viscum album (European mistletoe).